A 219-amino-acid chain; its full sequence is Thiopurine S-methyltransferase (219 aa).

Tryptophan 10, leucine 45, glutamate 66, and arginine 123 together coordinate S-adenosyl-L-methionine.

The protein belongs to the class I-like SAM-binding methyltransferase superfamily. TPMT family.

Its subcellular location is the cytoplasm. The enzyme catalyses S-adenosyl-L-methionine + a thiopurine = S-adenosyl-L-homocysteine + a thiopurine S-methylether.. This Shewanella frigidimarina (strain NCIMB 400) protein is Thiopurine S-methyltransferase.